The following is a 635-amino-acid chain: Threonine--tRNA ligase (635 aa).

The TGS domain occupies 1-62 (MITITLPDGS…EHDAILRIIT (62 aa)). The tract at residues 244–535 (DHRKIGKAQD…LIEHYAGIWP (292 aa)) is catalytic. Residues Cys335, His386, and His512 each contribute to the Zn(2+) site.

It belongs to the class-II aminoacyl-tRNA synthetase family. In terms of assembly, homodimer. Requires Zn(2+) as cofactor.

It localises to the cytoplasm. It carries out the reaction tRNA(Thr) + L-threonine + ATP = L-threonyl-tRNA(Thr) + AMP + diphosphate + H(+). Catalyzes the attachment of threonine to tRNA(Thr) in a two-step reaction: L-threonine is first activated by ATP to form Thr-AMP and then transferred to the acceptor end of tRNA(Thr). Also edits incorrectly charged L-seryl-tRNA(Thr). In Xylella fastidiosa (strain M23), this protein is Threonine--tRNA ligase.